Reading from the N-terminus, the 297-residue chain is tRNA pseudouridine synthase B (297 aa).

The active-site Nucleophile is the aspartate 44.

This sequence belongs to the pseudouridine synthase TruB family. Type 1 subfamily.

The catalysed reaction is uridine(55) in tRNA = pseudouridine(55) in tRNA. Functionally, responsible for synthesis of pseudouridine from uracil-55 in the psi GC loop of transfer RNAs. This chain is tRNA pseudouridine synthase B, found in Mycobacterium sp. (strain JLS).